We begin with the raw amino-acid sequence, 128 residues long: MIRSAVVLTVLVGVCLAQRGFVGGWSQVDPKIRPDLLELAHFAVASQTAGLEYYHTVLELTKASQQVVAGVNYKLTLKVAPSKCKVSETVYSKELCQPQLNAAPKDCEAQLYVVPWRNTKEVTSFECN.

The signal sequence occupies residues 1–17; it reads MIRSAVVLTVLVGVCLA. A Cystatin domain is found at 20-128; that stretch reads GFVGGWSQVD…TKEVTSFECN (109 aa). Disulfide bonds link cysteine 84/cysteine 96 and cysteine 107/cysteine 127.

Belongs to the cystatin family. Mainly expressed in gut.

It localises to the secreted. Functionally, inhibitor of cysteine proteinases. Strongly inhibits mammalian cathepsin B and H, and moderately inhibits mammalian cathepsin C. Also inhibits endogenous cathepsin B-like but not cathepsin C-like proteinases. May have a protective role against undesired digestion of a stored blood meal by endogenous peptidases. The protein is Cystatin-1 of Ornithodoros moubata (Soft tick).